Consider the following 66-residue polypeptide: Small ribosomal subunit protein bS21A (66 aa).

The segment covering 34 to 46 (KHYEKPSVKKKRK) has biased composition (basic residues). A disordered region spans residues 34–66 (KHYEKPSVKKKRKQMEAERKRRKAQRFRKPDRD).

This sequence belongs to the bacterial ribosomal protein bS21 family.

This is Small ribosomal subunit protein bS21A from Geobacter sulfurreducens (strain ATCC 51573 / DSM 12127 / PCA).